The following is a 213-amino-acid chain: Glycerol-3-phosphate acyltransferase (213 aa).

Transmembrane regions (helical) follow at residues 4–24 (IILL…LWIG), 48–68 (ILGV…GTLA), 71–91 (LPLF…LAVI), 113–133 (VILG…IIVL), 144–164 (VIGA…GFIL), and 165–185 (TSYD…IILR).

Belongs to the PlsY family. As to quaternary structure, probably interacts with PlsX.

The protein resides in the cell membrane. It carries out the reaction an acyl phosphate + sn-glycerol 3-phosphate = a 1-acyl-sn-glycero-3-phosphate + phosphate. It participates in lipid metabolism; phospholipid metabolism. Functionally, catalyzes the transfer of an acyl group from acyl-phosphate (acyl-PO(4)) to glycerol-3-phosphate (G3P) to form lysophosphatidic acid (LPA). This enzyme utilizes acyl-phosphate as fatty acyl donor, but not acyl-CoA or acyl-ACP. The protein is Glycerol-3-phosphate acyltransferase of Lactococcus lactis subsp. lactis (strain IL1403) (Streptococcus lactis).